An 89-amino-acid polypeptide reads, in one-letter code: Small ribosomal subunit protein uS15 (89 aa).

The protein belongs to the universal ribosomal protein uS15 family. In terms of assembly, part of the 30S ribosomal subunit. Forms a bridge to the 50S subunit in the 70S ribosome, contacting the 23S rRNA.

In terms of biological role, one of the primary rRNA binding proteins, it binds directly to 16S rRNA where it helps nucleate assembly of the platform of the 30S subunit by binding and bridging several RNA helices of the 16S rRNA. Forms an intersubunit bridge (bridge B4) with the 23S rRNA of the 50S subunit in the ribosome. This Crocosphaera subtropica (strain ATCC 51142 / BH68) (Cyanothece sp. (strain ATCC 51142)) protein is Small ribosomal subunit protein uS15.